A 274-amino-acid polypeptide reads, in one-letter code: MTQQLQSIIDAAWEDRANLSSAAAPKEVLDAVEHVISDLNAGRLRVATRESVGQWTTHQWIKKAVLLSFRLTDNQVMKAGDLGFYDKVPTKFAHLDEEAMKASGVRVVPPAVARRGSYLAKGVILMPSYVNIGAYVDEGTMVDTWATVGSCAQIGKHVHLSGGVGIGGVLEPMQAGPTIIEDNCFIGARSEVVEGVIVEENSVISMGVYLGQSTPIYDRATDTVSYGRIPSGSVVISGSLPKNEGKYSLYAAIIVKRVDAQTRAKTSLNDLLRD.

The substrate site is built by arginine 106 and aspartate 143.

Belongs to the transferase hexapeptide repeat family. In terms of assembly, homotrimer.

Its subcellular location is the cytoplasm. The enzyme catalyses (S)-2,3,4,5-tetrahydrodipicolinate + succinyl-CoA + H2O = (S)-2-succinylamino-6-oxoheptanedioate + CoA. The protein operates within amino-acid biosynthesis; L-lysine biosynthesis via DAP pathway; LL-2,6-diaminopimelate from (S)-tetrahydrodipicolinate (succinylase route): step 1/3. In Albidiferax ferrireducens (strain ATCC BAA-621 / DSM 15236 / T118) (Rhodoferax ferrireducens), this protein is 2,3,4,5-tetrahydropyridine-2,6-dicarboxylate N-succinyltransferase.